A 257-amino-acid chain; its full sequence is Cytochrome b561 domain-containing protein At2g30890 (257 aa).

An N-terminal signal peptide occupies residues 1-21 (MEIHHQLLVSLLFLLLPLCSS). In terms of domain architecture, Cytochrome b561 spans 22 to 219 (QENTRSLAID…LFQDKWSYIQ (198 aa)). 5 helical membrane passes run 55–75 (VHGF…IISI), 91–111 (LFFL…IGAV), 125–145 (HQQL…LGFL), 157–177 (WFVG…INIY), and 191–211 (ANLW…VYLF). Residues histidine 56, histidine 95, histidine 125, and histidine 161 each coordinate heme b. The interval 235–257 (NISTAETGHGYEVEESKPELEKC) is disordered. The span at 243 to 257 (HGYEVEESKPELEKC) shows a compositional bias: basic and acidic residues.

Heme b is required as a cofactor.

It localises to the membrane. The protein is Cytochrome b561 domain-containing protein At2g30890 of Arabidopsis thaliana (Mouse-ear cress).